An 811-amino-acid chain; its full sequence is Endothelin-converting enzyme 2 (811 aa).

The Cytoplasmic portion of the chain corresponds to 1–106; it reads MNVALQELGA…QLLGSRTQLE (106 aa). The segment at 22–64 is disordered; it reads LRDEDAPETPVEGGASPDAMEVGKGASPFSPGPSPGMTPGTPR. Residues 107-127 form a helical; Signal-anchor for type II membrane protein membrane-spanning segment; it reads LVLAGASLLLAALLLGCLVAL. The Lumenal portion of the chain corresponds to 128 to 811; it reads GVQYHRDPSH…MNPGQLCEVW (684 aa). Residues 139–811 form the Peptidase M13 domain; sequence TCLTEACIRV…MNPGQLCEVW (673 aa). 5 cysteine pairs are disulfide-bonded: Cys-140-Cys-145, Cys-163-Cys-796, Cys-171-Cys-756, Cys-227-Cys-476, and Cys-685-Cys-808. Asn-207, Asn-211, Asn-252, Asn-312, Asn-357, Asn-424, and Asn-580 each carry an N-linked (GlcNAc...) asparagine glycan. His-648 contributes to the Zn(2+) binding site. Glu-649 is a catalytic residue. A Zn(2+)-binding site is contributed by His-652. Residues Asn-673 and Asn-681 are each glycosylated (N-linked (GlcNAc...) asparagine). Residue Glu-708 coordinates Zn(2+). The active-site Proton donor is Asp-712.

It belongs to the peptidase M13 family. Zn(2+) is required as a cofactor.

Its subcellular location is the golgi apparatus membrane. The protein resides in the cytoplasmic vesicle. It is found in the secretory vesicle membrane. It catalyses the reaction Hydrolysis of the 21-Trp-|-Val-22 bond in big endothelin to form endothelin 1.. Converts big endothelin-1 to endothelin-1. Also involved in the processing of various neuroendocrine peptides, including neurotensin, angiotensin I, substance P, proenkephalin-derived peptides, and prodynorphin-derived peptides. May play a role in amyloid-beta processing. In Homo sapiens (Human), this protein is Endothelin-converting enzyme 2.